The primary structure comprises 337 residues: Hsp90 co-chaperone Cdc37-like 1 (337 aa).

Positions 1-11 are enriched in pro residues; sequence MEQPWPPPGPW. The disordered stretch occupies residues 1-42; sequence MEQPWPPPGPWSLPRAEGEAEEENDLDVFPSSPRCPQLPGGS. Residues 2–171 are self-association; sequence EQPWPPPGPW…YEQKIRHFGM (170 aa). A phosphoserine mark is found at Ser32 and Ser88. A coiled-coil region spans residues 85 to 122; sequence NSESLDQEHAKAQIAVSELRQREEEWRQKEEALVQREK. The tract at residues 147–277 is self-association and interaction with Hsp90; sequence KDTEDEDKSE…SRVRLYSQSQ (131 aa). The interaction with Hsp70 stretch occupies residues 267 to 337; that stretch reads KSRVRLYSQS…DDEPKMMDTV (71 aa). The required for interaction with STIP1 stretch occupies residues 278-337; sequence SFQPMTVQNHVPHSGVGSIGLLESLPQNPDYLQYSINTALCSLNSVVHKEDDEPKMMDTV.

It belongs to the CDC37 family. As to quaternary structure, self-associates. Forms complexes with Hsp70 and Hsp90. Interacts with CDC37, FKBP4, PPID and STIP1.

It localises to the cytoplasm. In terms of biological role, co-chaperone that binds to numerous proteins and promotes their interaction with Hsp70 and Hsp90. This Pongo abelii (Sumatran orangutan) protein is Hsp90 co-chaperone Cdc37-like 1 (CDC37L1).